A 214-amino-acid chain; its full sequence is Peptidyl-tRNA hydrolase (214 aa).

Tyr-14 is a binding site for tRNA. Residue His-19 is the Proton acceptor of the active site. TRNA is bound by residues Tyr-64, Asn-66, and Asn-113. Residues 184-214 (RINAPPPKPEKKRGSETSDPSAESADHAGGG) are disordered.

The protein belongs to the PTH family. In terms of assembly, monomer.

It localises to the cytoplasm. The enzyme catalyses an N-acyl-L-alpha-aminoacyl-tRNA + H2O = an N-acyl-L-amino acid + a tRNA + H(+). Hydrolyzes ribosome-free peptidyl-tRNAs (with 1 or more amino acids incorporated), which drop off the ribosome during protein synthesis, or as a result of ribosome stalling. Its function is as follows. Catalyzes the release of premature peptidyl moieties from peptidyl-tRNA molecules trapped in stalled 50S ribosomal subunits, and thus maintains levels of free tRNAs and 50S ribosomes. The chain is Peptidyl-tRNA hydrolase from Roseiflexus castenholzii (strain DSM 13941 / HLO8).